The chain runs to 185 residues: Ribosome-recycling factor (185 aa).

The protein belongs to the RRF family.

It is found in the cytoplasm. Functionally, responsible for the release of ribosomes from messenger RNA at the termination of protein biosynthesis. May increase the efficiency of translation by recycling ribosomes from one round of translation to another. The sequence is that of Ribosome-recycling factor from Sulfurovum sp. (strain NBC37-1).